A 2073-amino-acid chain; its full sequence is Fatty acid synthase subunit beta (2073 aa).

The acetyltransferase stretch occupies residues 1–459 (MVEAEQVHQS…VYSTDDAGDL (459 aa)). Catalysis depends on S270, which acts as the For acetyltransferase activity. The segment at 470–858 (ALAVMITEKV…TRGIMFWKEL (389 aa)) is enoyl reductase. S1122 carries the post-translational modification Phosphoserine. Residues 1155 to 1644 (GPEYTWFRAI…LPNTELITKL (490 aa)) are dehydratase. The For dehydratase activity role is filled by H1361. The region spanning 1558 to 1667 (PVFVTPPTNS…VEVLNQETSE (110 aa)) is the MaoC-like domain. Residues 1645-2073 (SHTGMINGRK…LQNWDEYESS (429 aa)) form a malonyl/palmitoyl transferase region. S1828 functions as the For malonyltransferase activity in the catalytic mechanism. S2073 is modified (phosphoserine).

The protein belongs to the fungal fatty acid synthetase subunit beta family. As to quaternary structure, [Alpha(6)beta(6)] hexamers of two multifunctional subunits (alpha and beta).

It catalyses the reaction acetyl-CoA + n malonyl-CoA + 2n NADPH + 4n H(+) = a long-chain-acyl-CoA + n CoA + n CO2 + 2n NADP(+).. It carries out the reaction holo-[ACP] + acetyl-CoA = acetyl-[ACP] + CoA. The enzyme catalyses holo-[ACP] + malonyl-CoA = malonyl-[ACP] + CoA. The catalysed reaction is a (3R)-hydroxyacyl-[ACP] = a (2E)-enoyl-[ACP] + H2O. It catalyses the reaction a 2,3-saturated acyl-[ACP] + NAD(+) = a (2E)-enoyl-[ACP] + NADH + H(+). It carries out the reaction (9Z)-octadecenoyl-[ACP] + H2O = (9Z)-octadecenoate + holo-[ACP] + H(+). Functionally, fatty acid synthetase catalyzes the formation of long-chain fatty acids from acetyl-CoA, malonyl-CoA and NADPH. The beta subunit contains domains for: [acyl-carrier-protein] acetyltransferase and malonyltransferase, S-acyl fatty acid synthase thioesterase, enoyl-[acyl-carrier-protein] reductase, and 3-hydroxypalmitoyl-[acyl-carrier-protein] dehydratase. The protein is Fatty acid synthase subunit beta (fas1) of Schizosaccharomyces pombe (strain 972 / ATCC 24843) (Fission yeast).